The chain runs to 780 residues: Protein phosphatase 1 regulatory subunit 21 (780 aa).

Coiled coils occupy residues 1 to 209 (MASA…NLHE) and 556 to 605 (ESRE…DRLR). A disordered region spans residues 84 to 104 (EPRGKKNKKSGESSSQLSQEQ). The span at 95–104 (ESSSQLSQEQ) shows a compositional bias: low complexity. At Thr-652 the chain carries Phosphothreonine. Positions 694 to 742 (AECRALSKRLALAEKSKETLTEEMRLASQNISRLQDELMTTKRSYEDQL) form a coiled coil.

Component of the FERRY complex, composed of five subunits: TBCK, PPP1R21, FERRY3, CRYZL1 and GATAD1, with a ratio of 1:2:1:2:4 respectively. PPP1R21 serves as a binding hub connecting all five complex subunits to mediate the binding to specific mitochondrial mRNAs. Interacts with the GTP-bound form of RAB5A (via its C-terminal region); linking the mRNP complex onto trafficking endosomes for active mRNA transport. Interacts with PPP1CA. As to expression, expressed at 16 dpc in the cortex (at protein level).

The protein localises to the early endosome. Functionally, component of the FERRY complex (Five-subunit Endosomal Rab5 and RNA/ribosome intermediary). The FERRY complex directly interacts with mRNAs and RAB5A, and functions as a RAB5A effector involved in the localization and the distribution of specific mRNAs most likely by mediating their endosomal transport. The complex recruits mRNAs and ribosomes to early endosomes through direct mRNA-interaction. In the complex, PPP1R21 serves as a binding hub connecting all five complex subunits and mediating the binding to mRNA and early endosomes via RAB5A. Putative regulator of protein phosphatase 1 (PP1) activity. May play a role in the endosomal sorting process or in endosome maturation pathway. The sequence is that of Protein phosphatase 1 regulatory subunit 21 (Ppp1r21) from Mus musculus (Mouse).